A 620-amino-acid chain; its full sequence is Long-chain fatty acid transport protein 2 (620 aa).

Topologically, residues 1–4 (MLPV) are lumenal. Residues 5–27 (LYTGLAGLLLLPLLLTCCCPYLL) traverse the membrane as a helical segment. Residues 28-106 (QDVRFFLQLA…DHLGLRQGDC (79 aa)) are Cytoplasmic-facing. The chain crosses the membrane as a helical span at residues 107 to 127 (VALFMGNEPAYVWLWLGLLKL). Over 128-267 (GCPMACLNYN…DVIYTTMPLY (140 aa)) the chain is Lumenal. Residue 222 to 233 (YIYTSGTTGLPK) coordinates AMP. The helical transmembrane segment at 268 to 288 (HSAALMIGLHGCIVVGATFAL) threads the bilayer. Over 289–620 (RSKFSASQFW…NAIIDKTLKL (332 aa)) the chain is Cytoplasmic. Lysine 291 carries the post-translational modification N6-acetyllysine. Position 577 is a phosphothreonine (threonine 577).

The protein belongs to the ATP-dependent AMP-binding enzyme family. Liver and kidney (at protein level).

It is found in the endoplasmic reticulum membrane. It localises to the peroxisome membrane. The protein resides in the cell membrane. Its subcellular location is the microsome. The catalysed reaction is a fatty acid(in) = a fatty acid(out). It carries out the reaction (9Z)-octadecenoate(out) = (9Z)-octadecenoate(in). The enzyme catalyses a long-chain fatty acid + ATP + CoA = a long-chain fatty acyl-CoA + AMP + diphosphate. It catalyses the reaction (5Z,8Z,11Z,14Z)-eicosatetraenoate + ATP + CoA = (5Z,8Z,11Z,14Z)-eicosatetraenoyl-CoA + AMP + diphosphate. The catalysed reaction is (9Z,12Z,15Z)-octadecatrienoate + ATP + CoA = (9Z,12Z,15Z)-octadecatrienoyl-CoA + AMP + diphosphate. It carries out the reaction hexadecanoate + ATP + CoA = hexadecanoyl-CoA + AMP + diphosphate. The enzyme catalyses (9Z)-octadecenoate + ATP + CoA = (9Z)-octadecenoyl-CoA + AMP + diphosphate. It catalyses the reaction 2,6,10,14-tetramethylpentadecanoate + ATP + CoA = pristanoyl-CoA + AMP + diphosphate. The catalysed reaction is (E)-hexadec-2-enoate + ATP + CoA = (2E)-hexadecenoyl-CoA + AMP + diphosphate. It carries out the reaction 3,7,11,15-tetramethylhexadecanoate + ATP + CoA = phytanoyl-CoA + AMP + diphosphate. The enzyme catalyses a very long-chain fatty acid + ATP + CoA = a very long-chain fatty acyl-CoA + AMP + diphosphate. It catalyses the reaction tetracosanoate + ATP + CoA = tetracosanoyl-CoA + AMP + diphosphate. The catalysed reaction is (4Z,7Z,10Z,13Z,16Z,19Z)-docosahexaenoate + ATP + CoA = (4Z,7Z,10Z,13Z,16Z,19Z)-docosahexaenoyl-CoA + AMP + diphosphate. It carries out the reaction (25R)-3alpha,7alpha,12alpha-trihydroxy-5beta-cholestan-26-oate + ATP + CoA = (25R)-3alpha,7alpha,12alpha-trihydroxy-5beta-cholestan-26-oyl-CoA + AMP + diphosphate. Its function is as follows. Mediates the import of long-chain fatty acids (LCFA) into the cell by facilitating their transport across cell membranes, playing an important role in hepatic fatty acid uptake. Also functions as an acyl-CoA ligase catalyzing the ATP-dependent formation of fatty acyl-CoA using LCFA and very-long-chain fatty acids (VLCFA) as substrates, which prevents fatty acid efflux from cells and might drive more fatty acid uptake. Plays a pivotal role in regulating available LCFA substrates from exogenous sources in tissues undergoing high levels of beta-oxidation or triglyceride synthesis. Can also activate branched-chain fatty acids such as phytanic acid and pristanic acid. May contribute to the synthesis of sphingosine-1-phosphate. Does not activate C24 bile acids, cholate and chenodeoxycholate. In vitro, activates 3-alpha,7-alpha,12-alpha-trihydroxy-5-beta-cholestanate (THCA), the C27 precursor of cholic acid deriving from the de novo synthesis from cholesterol. However, it is not critical for THCA activation and bile synthesis in vivo. In Rattus norvegicus (Rat), this protein is Long-chain fatty acid transport protein 2 (Slc27a2).